A 1050-amino-acid polypeptide reads, in one-letter code: Toluene efflux pump membrane transporter TtgB (1050 aa).

The next 12 membrane-spanning stretches (helical) occupy residues 10-30 (IFAW…ILKL), 339-359 (GVIH…YLFL), 370-390 (MTVP…GFSI), 393-413 (LTMF…IVVV), 440-460 (GALV…AFFG), 472-492 (ITIV…TPAL), 539-559 (VPFL…FARI), 871-891 (MPAL…ALYE), 893-913 (WSIP…ALIA), 923-943 (VYFL…AILI), 972-992 (IIMT…ASGA), and 1004-1024 (VIGG…LFFV).

It belongs to the resistance-nodulation-cell division (RND) (TC 2.A.6) family.

Its subcellular location is the cell inner membrane. Functionally, the inner membrane transporter component of a constitutive organic solvent efflux system. Involved in export of toluene, styrene, m-xylene, propylbenzene and ethylbenzene. Also exports AMP and the antibiotics carbenicillin, nalidixic acid, chloramphenicol and tetracycline. This chain is Toluene efflux pump membrane transporter TtgB (ttgB), found in Pseudomonas putida (strain DOT-T1E).